An 80-amino-acid chain; its full sequence is RNA-binding protein Hfq (80 aa).

In terms of domain architecture, Sm spans 7-67; sequence ESFLNTARKK…ITTIVPHERL (61 aa).

It belongs to the Hfq family. As to quaternary structure, homohexamer.

In terms of biological role, RNA chaperone that binds small regulatory RNA (sRNAs) and mRNAs to facilitate mRNA translational regulation in response to envelope stress, environmental stress and changes in metabolite concentrations. Also binds with high specificity to tRNAs. In Aquifex aeolicus (strain VF5), this protein is RNA-binding protein Hfq.